Here is a 199-residue protein sequence, read N- to C-terminus: Ribosomal RNA large subunit methyltransferase E (199 aa).

5 residues coordinate S-adenosyl-L-methionine: Gly-53, Trp-55, Asp-73, Asp-92, and Asp-114. Catalysis depends on Lys-154, which acts as the Proton acceptor.

Belongs to the class I-like SAM-binding methyltransferase superfamily. RNA methyltransferase RlmE family.

It localises to the cytoplasm. It catalyses the reaction uridine(2552) in 23S rRNA + S-adenosyl-L-methionine = 2'-O-methyluridine(2552) in 23S rRNA + S-adenosyl-L-homocysteine + H(+). Functionally, specifically methylates the uridine in position 2552 of 23S rRNA at the 2'-O position of the ribose in the fully assembled 50S ribosomal subunit. The sequence is that of Ribosomal RNA large subunit methyltransferase E from Treponema denticola (strain ATCC 35405 / DSM 14222 / CIP 103919 / JCM 8153 / KCTC 15104).